Reading from the N-terminus, the 317-residue chain is MMFADDLVRMAVLRFITVALAAITNVANAVPTDATKRQDSNLPFPLAHFTNTVASVQNTYCGPTANTPGVKFGDQTLLHAIGDGDTVQRTNIYHSESLGIIVASQGTNLSSIVSQSHNIQAIPIIPDARLGLPFGSMVFAGWQNAWSKGWTDVSAALADTIKQFPNDQIIVTGHSQGAAISLLTALAIQNQFGNVSTIREIIAYGPPRVGTPAFADAFDTIFPGKYTGVVNGDDWVPSLPSQPIYRHPSGMVWINPANSTSWKYYPGQENPDGPDSRVIQMFYPGTLQFNWGDHQGIYMHSSMGTTQGPCPAQVGGF.

The N-terminal stretch at 1-29 (MMFADDLVRMAVLRFITVALAAITNVANA) is a signal peptide. The cysteines at positions 61 and 310 are disulfide-linked. N-linked (GlcNAc...) asparagine glycosylation occurs at Asn108. Ser175 serves as the catalytic Nucleophile. Residue Asn194 is glycosylated (N-linked (GlcNAc...) asparagine). Asp234 is a catalytic residue. Residue Asn258 is glycosylated (N-linked (GlcNAc...) asparagine). His294 is an active-site residue.

This sequence belongs to the AB hydrolase superfamily. Lipase family. Class 3 subfamily.

It is found in the secreted. It carries out the reaction a monoacylglycerol + H2O = glycerol + a fatty acid + H(+). The catalysed reaction is a diacylglycerol + H2O = a monoacylglycerol + a fatty acid + H(+). Its function is as follows. Secreted mono- and diacylglycerol lipase involved in plant virulence. Has a substrate preference for p-nitrophenyl esters with a carbon chain length of C10 (p-nitrophenyl caprate). The protein is Secreted mono- and diacylglycerol lipase 3 of Gibberella zeae (strain ATCC MYA-4620 / CBS 123657 / FGSC 9075 / NRRL 31084 / PH-1) (Wheat head blight fungus).